Consider the following 412-residue polypeptide: Short-chain specific acyl-CoA dehydrogenase, mitochondrial (412 aa).

The N-terminal 24 residues, 1-24 (MAAALLARAGGSLGRALRARDWRR), are a transit peptide targeting the mitochondrion. Thr27 bears the Phosphothreonine mark. Lys51 is modified (N6-acetyllysine; alternate). Lys51 carries the N6-succinyllysine; alternate modification. Position 72 is an N6-acetyllysine (Lys72). Position 129 is an N6-acetyllysine; alternate (Lys129). At Lys129 the chain carries N6-succinyllysine; alternate. FAD-binding positions include 152-161 (FALSEPGNGS) and 185-187 (WIT). Substrate is bound at residue Ser161. Lys208 carries the N6-acetyllysine modification. Lys262 carries the post-translational modification N6-acetyllysine; alternate. Lys262 carries the N6-succinyllysine; alternate modification. Position 269–272 (269–272 (DMGR)) interacts with substrate. The residue at position 292 (Lys292) is an N6-acetyllysine. Arg297 provides a ligand contact to FAD. The residue at position 306 (Lys306) is an N6-acetyllysine; alternate. Position 306 is an N6-succinyllysine; alternate (Lys306). 365–369 (QILGG) lines the FAD pocket. The Proton acceptor role is filled by Glu392. 394–396 (TSE) is a binding site for FAD.

This sequence belongs to the acyl-CoA dehydrogenase family. As to quaternary structure, homotetramer. Requires FAD as cofactor.

Its subcellular location is the mitochondrion matrix. The enzyme catalyses a short-chain 2,3-saturated fatty acyl-CoA + oxidized [electron-transfer flavoprotein] + H(+) = a short-chain (2E)-enoyl-CoA + reduced [electron-transfer flavoprotein]. The catalysed reaction is butanoyl-CoA + oxidized [electron-transfer flavoprotein] + H(+) = (2E)-butenoyl-CoA + reduced [electron-transfer flavoprotein]. It catalyses the reaction pentanoyl-CoA + oxidized [electron-transfer flavoprotein] + H(+) = (2E)-pentenoyl-CoA + reduced [electron-transfer flavoprotein]. It carries out the reaction hexanoyl-CoA + oxidized [electron-transfer flavoprotein] + H(+) = (2E)-hexenoyl-CoA + reduced [electron-transfer flavoprotein]. It participates in lipid metabolism; mitochondrial fatty acid beta-oxidation. Functionally, short-chain specific acyl-CoA dehydrogenase is one of the acyl-CoA dehydrogenases that catalyze the first step of mitochondrial fatty acid beta-oxidation, an aerobic process breaking down fatty acids into acetyl-CoA and allowing the production of energy from fats. The first step of fatty acid beta-oxidation consists in the removal of one hydrogen from C-2 and C-3 of the straight-chain fatty acyl-CoA thioester, resulting in the formation of trans-2-enoyl-CoA. Among the different mitochondrial acyl-CoA dehydrogenases, short-chain specific acyl-CoA dehydrogenase acts specifically on acyl-CoAs with saturated 4 to 6 carbons long primary chains. This is Short-chain specific acyl-CoA dehydrogenase, mitochondrial (Acads) from Rattus norvegicus (Rat).